We begin with the raw amino-acid sequence, 77 residues long: Mu-conotoxin BuIIIA (77 aa).

The signal sequence occupies residues 1–22 (MMSKLGVLLTICLLLFPLFALP). The propeptide occupies 23 to 51 (QDGDQPADRPAERMQDDISSEQNSLLEKR). Positions 26–46 (DQPADRPAERMQDDISSEQNS) are disordered. The segment covering 28-38 (PADRPAERMQD) has biased composition (basic and acidic residues). 3 cysteine pairs are disulfide-bonded: Cys-56/Cys-67, Cys-57/Cys-73, and Cys-63/Cys-74. Cys-74 carries the cysteine amide modification.

This sequence belongs to the conotoxin M superfamily. In terms of tissue distribution, expressed by the venom duct.

The protein localises to the secreted. In terms of biological role, mu-conotoxins block voltage-gated sodium channels (Nav). This synthetic toxin potently blocks rNav1.2/SCN2A, and rNav1.4/SCN4A. It also moderately blocks rNav1.1/SCN1A, rNav1.3/SCN3A, rNav1.5/SCN5A, and mNav1.6/SCN8A. The inhibition is reversible. The polypeptide is Mu-conotoxin BuIIIA (Conus bullatus (Bubble cone)).